We begin with the raw amino-acid sequence, 421 residues long: Fumarylacetoacetase (421 aa).

Residue Asp131 coordinates Ca(2+). The active-site Proton acceptor is His138. Arg147 serves as a coordination point for substrate. Ca(2+)-binding residues include Glu204, Glu206, and Asp238. Residue Asp238 coordinates Mg(2+). Residues Gln245 and Tyr249 each contribute to the substrate site. Mg(2+) contacts are provided by Lys258 and Thr262. Thr355 is a binding site for substrate.

It belongs to the FAH family. Requires Ca(2+) as cofactor. Mg(2+) is required as a cofactor.

It carries out the reaction 4-fumarylacetoacetate + H2O = acetoacetate + fumarate + H(+). The protein operates within amino-acid degradation; L-phenylalanine degradation; acetoacetate and fumarate from L-phenylalanine: step 6/6. Converts fumarylacetoacetate to acetoacetate and fumarate. Involved in tyrosine catabolic pathway. Catalyzes the final step in the tyrosine degradation pathway. This Arabidopsis thaliana (Mouse-ear cress) protein is Fumarylacetoacetase.